A 564-amino-acid chain; its full sequence is Phomacin cluster regulator phmR (564 aa).

Positions Cys33–Cys64 form a DNA-binding region, zn(2)-C6 fungal-type. 3 disordered regions span residues Ser68–Ala93, Asp152–Leu197, and Pro252–Thr278. Composition is skewed to polar residues over residues Ile182 to Val192 and Met258 to Thr278.

It is found in the nucleus. Transcription factor that specifically regulates the expression of the gene cluster that mediates the biosynthesis of the mycotoxins phomacins, leucine-derived cytochalasans with potent actin polymerization-inhibitory activities and monocot-specific antigerminative activities. This is Phomacin cluster regulator phmR from Phaeosphaeria nodorum (strain SN15 / ATCC MYA-4574 / FGSC 10173) (Glume blotch fungus).